The sequence spans 557 residues: MAEEQNPSATFDTILTLDFGSQYTHLITRRLREIGVYSEMLPCTQKLADLPFKPKGIILSGGPYSVYEDGAPHADPAVFELGVPVLGICYGLQEIAYRLGKDNVVAGTAREYGHADLNAQRLDNQGHVDKLFAGLEEHVKVWMSHGDKLVKLPEGFHTIATTANSEYAGIAHETKPVYGIQFHPEVTHTPDGAKLLRNFAVDICGANPNWTMSKFVDQEILRIRKLVGETDHVLGAVSGGVDSTVAAKLMKEAIGDRFHAVLVNNGCMRLNECETVAETLNKHLGINLTVVDASKRFLDGLKGVTDPEKKRMFIGATFIDVFEEEAEKIEALAENSGAKVKWFLQGTLYPDVIESISFKGPSATIKTHHNVGALPKRMIEGQGMKLIEPLRELFKDEVRQLGRELGIAHELVMRHPFPGPGIAIRVLGEVTPERVDIARKADHIFISMIREAGLYDKISQAYAALDPSKAVGVMGDKRVYAEIIILRAVETTDCKLTLGIDGDFVLRYIISVMTARAFPFDNEFLSKCATRIINEVHGVSRVLYDISSKPPATIEME.

One can recognise a Glutamine amidotransferase type-1 domain in the interval 13 to 209 (TILTLDFGSQ…AVDICGANPN (197 aa)). Cys-89 (nucleophile) is an active-site residue. Residues His-183 and Glu-185 contribute to the active site. Residues 210–414 (WTMSKFVDQE…LGIAHELVMR (205 aa)) enclose the GMPS ATP-PPase domain. 238 to 244 (SGGVDST) serves as a coordination point for ATP. XMP contacts are provided by Arg-311, Asp-476, Lys-549, and Glu-555.

In terms of assembly, homodimer. Mg(2+) serves as cofactor.

It is found in the cytoplasm. It localises to the cytosol. It catalyses the reaction XMP + L-glutamine + ATP + H2O = GMP + L-glutamate + AMP + diphosphate + 2 H(+). It participates in purine metabolism; GMP biosynthesis; GMP from XMP (L-Gln route): step 1/1. Inhibited by 6-diazo-5-oxo-l-norleucine (DON) and acivicin (ACI). Its function is as follows. Catalyzes the conversion of xanthine monophosphate (XMP) to GMP in the presence of glutamine and ATP through an adenyl-XMP intermediate. The polypeptide is GMP synthase [glutamine-hydrolyzing] (gua1) (Aspergillus fumigatus (strain ATCC MYA-4609 / CBS 101355 / FGSC A1100 / Af293) (Neosartorya fumigata)).